The primary structure comprises 81 residues: Large ribosomal subunit protein bL31B (81 aa).

It belongs to the bacterial ribosomal protein bL31 family. Type B subfamily. In terms of assembly, part of the 50S ribosomal subunit.

This Exiguobacterium sibiricum (strain DSM 17290 / CCUG 55495 / CIP 109462 / JCM 13490 / 255-15) protein is Large ribosomal subunit protein bL31B.